The primary structure comprises 513 residues: NADH-quinone oxidoreductase chain 13 (513 aa).

14 helical membrane passes run 3–23 (NLLS…ALFL), 34–54 (AKWL…FVLF), 81–101 (VDGI…LTIL), 112–132 (EYMI…TALD), 133–153 (LVLF…IIGI), 164–184 (FKFF…MIAM), 211–231 (MTVV…SFAV), 250–270 (PTAG…YGFL), 277–297 (FPVA…IAIV), 312–332 (VIAY…FAAN), 340–360 (IFQM…VGVI), 383–403 (AAVF…SGFV), 418–438 (WVAL…LWLY), and 463–483 (WVFI…RLVT).

Belongs to the complex I subunit 4 family. As to quaternary structure, NDH-1 is composed of at least 14 different subunits, Nqo1 to Nqo14. The complex has a L-shaped structure, with the hydrophobic arm (subunits Nqo7, Nqo8, Nqo10 to Nqo14) embedded in the inner membrane and the hydrophilic peripheral arm (subunits Nqo1 to Nqo6, Nqo9) protruding into the bacterial cytoplasm. The hydrophilic domain contains all the redox centers.

Its subcellular location is the cell inner membrane. It catalyses the reaction a quinone + NADH + 5 H(+)(in) = a quinol + NAD(+) + 4 H(+)(out). Its function is as follows. NDH-1 shuttles electrons from NADH, via FMN and iron-sulfur (Fe-S) centers, to quinones in the respiratory chain. The immediate electron acceptor for the enzyme in this species is believed to be ubiquinone. Couples the redox reaction to proton translocation (for every two electrons transferred, four hydrogen ions are translocated across the cytoplasmic membrane), and thus conserves the redox energy in a proton gradient. The chain is NADH-quinone oxidoreductase chain 13 from Paracoccus denitrificans.